The following is a 407-amino-acid chain: MDRIFTNLNLVTMKTDLSTPNDGYQIIQDAMIGVTNGKVEYVGHSCPEIFHGHPDVIDCGNALVTPGFIDCHTHLIFAGNRANEFEQRLQGVPYQDIARQGGGILSTVNATRQASEDELYHLAVQRLEGLKRDGVTTVEIKSGYGLTLYDELKMLRVAKRIAKLPDMKVSSTLLAAHALPPEYKDKPDDYITLICDSIIPTVAEQKLADHVDVFCEGIGFSVEQCQRVFDAALTHELGIKGHTEQLSNLGGSALAASMGADSVDHIEYLDEDGVKSLAKHNTVATLLPGAFYFLRETQLPPIDLLRKHHVPMAISTDFNPGTSPIASLRMMMNMACTLFRLTPEEALRGVTCNAAQALGLQSSRGQISVGMEADFALWQLDSPAELSYRLGVPDLIARVVDGDVFYN.

The Fe(3+) site is built by His-72 and His-74. Zn(2+) is bound by residues His-72 and His-74. 4-imidazolone-5-propanoate is bound by residues Arg-81, Tyr-144, and His-177. Tyr-144 serves as a coordination point for N-formimidoyl-L-glutamate. His-242 is a Fe(3+) binding site. His-242 contributes to the Zn(2+) binding site. Position 245 (Gln-245) interacts with 4-imidazolone-5-propanoate. Asp-317 is a Fe(3+) binding site. Asp-317 provides a ligand contact to Zn(2+). N-formimidoyl-L-glutamate contacts are provided by Asn-319 and Gly-321. A 4-imidazolone-5-propanoate-binding site is contributed by Thr-322.

Belongs to the metallo-dependent hydrolases superfamily. HutI family. Requires Zn(2+) as cofactor. Fe(3+) serves as cofactor.

Its subcellular location is the cytoplasm. It carries out the reaction 4-imidazolone-5-propanoate + H2O = N-formimidoyl-L-glutamate. Its pathway is amino-acid degradation; L-histidine degradation into L-glutamate; N-formimidoyl-L-glutamate from L-histidine: step 3/3. In terms of biological role, catalyzes the hydrolytic cleavage of the carbon-nitrogen bond in imidazolone-5-propanoate to yield N-formimidoyl-L-glutamate. It is the third step in the universal histidine degradation pathway. This chain is Imidazolonepropionase, found in Aliivibrio salmonicida (strain LFI1238) (Vibrio salmonicida (strain LFI1238)).